Reading from the N-terminus, the 538-residue chain is SWM histone demethylase complex subunit phf2 (538 aa).

Disordered regions lie at residues 28 to 47, 98 to 150, and 198 to 222; these read RFPN…NQNG, EIES…SSPL, and TKSG…RRRG. The span at 98-111 shows a compositional bias: basic and acidic residues; sequence EIESSKNQETDAKS. A PHD-type zinc finger spans residues 232 to 288; sequence AMKCSVCQRLQSPPKNRIVFCDGCNTPFHQLCHEPYISDELLDSPNGEWFCDDCIRR. The segment covering 367-392 has biased composition (polar residues); that stretch reads GDQYLSLNNGTESQSKTTKHSTSLPS. Positions 367-396 are disordered; sequence GDQYLSLNNGTESQSKTTKHSTSLPSTEPV.

In terms of assembly, component of the SWM histone demethylase complex composed of at least lsd1, lsd2, phf1 and phf2.

The protein localises to the nucleus. In terms of biological role, component of the SWM histone demethylase complex that specifically demethylates H3K9me2, a specific tag for epigenetic transcriptional activation, thereby acting as a corepressor. Has a role in regulating heterochromatin propagation and euchromatic transcription. The polypeptide is SWM histone demethylase complex subunit phf2 (phf2) (Schizosaccharomyces pombe (strain 972 / ATCC 24843) (Fission yeast)).